Reading from the N-terminus, the 680-residue chain is Tumor protein 63 (680 aa).

The interval 1 to 107 is transcription activation; the sequence is MNFETSRCAT…MQDSDLSDPM (107 aa). Residues 123–157 show a composition bias toward polar residues; the sequence is QIQNGSSSTSPYNTDHAQNSVTAPSPYAQPSSTFD. The tract at residues 123 to 171 is disordered; the sequence is QIQNGSSSTSPYNTDHAQNSVTAPSPYAQPSSTFDALSPSPAIPSNTDY. The DNA-binding element occupies 170–362; the sequence is DYPGPHSFDV…KADEDSIRKQ (193 aa). 4 residues coordinate Zn(2+): C244, H247, C308, and C312. Residues 351–360 are compositionally biased toward basic and acidic residues; it reads DRKADEDSIR. 2 disordered regions span residues 351-393 and 436-472; these read DRKA…IKKR and RQQQ…MNSM. An interaction with HIPK2 region spans residues 352–388; that stretch reads RKADEDSIRKQQVSDSAKNGDGTKRPFRQNTHGIQMT. A compositionally biased stretch (polar residues) spans 379–389; that stretch reads RQNTHGIQMTS. The oligomerization stretch occupies residues 394–443; that stretch reads RSPDDELLYLPVRGRETYEMLLKIKESLELMQYLPQHTIETYRQQQQQQH. Low complexity predominate over residues 437-463; the sequence is QQQQQQHQHLLQKQTSMQSQSSYGNSS. Residues 541 to 607 enclose the SAM domain; it reads PPYPTDCSIV…WKGILDHRQL (67 aa). A transactivation inhibition region spans residues 610 to 680; it reads FSSPPHLLRT…KQQRIKEEGE (71 aa). K676 participates in a covalent cross-link: Glycyl lysine isopeptide (Lys-Gly) (interchain with G-Cter in SUMO).

It belongs to the p53 family. As to quaternary structure, binds DNA as a homotetramer. Isoform composition of the tetramer may determine transactivation activity. Interacts with HIPK2. Interacts with SSRP1, leading to stimulate coactivator activity. Interacts with PDS5A. Interacts (via activation domain) with NOC2L. Interacts with WWP1. It depends on Zn(2+) as a cofactor. Post-translationally, may be sumoylated. Ubiquitinated. Polyubiquitination involves WWP1 and leads to proteasomal degradation of this protein. Widely expressed, notably in thymus, prostate, placenta and skeletal muscle, although the precise isoform varies according to tissue type. Progenitor cell layers of skin, breast and prostate express high levels of DeltaN-type isoforms.

The protein resides in the nucleus. Functionally, acts as a sequence specific DNA binding transcriptional activator or repressor. The isoforms contain a varying set of transactivation and auto-regulating transactivation inhibiting domains thus showing an isoform specific activity. May be required in conjunction with TP73/p73 for initiation of p53/TP53 dependent apoptosis in response to genotoxic insults and the presence of activated oncogenes. Involved in Notch signaling by probably inducing JAG1 and JAG2. Activates transcription of the p21 promoter. Activates RIPK4 transcription. Plays a role in the regulation of epithelial morphogenesis. The ratio of DeltaN-type and TA*-type isoforms may govern the maintenance of epithelial stem cell compartments and regulate the initiation of epithelial stratification from the undifferentiated embryonal ectoderm. Required for limb formation from the apical ectodermal ridge. This is Tumor protein 63 (Tp63) from Mus musculus (Mouse).